The sequence spans 78 residues: Large ribosomal subunit protein bL28 (78 aa).

This sequence belongs to the bacterial ribosomal protein bL28 family.

This chain is Large ribosomal subunit protein bL28, found in Gloeothece citriformis (strain PCC 7424) (Cyanothece sp. (strain PCC 7424)).